An 88-amino-acid polypeptide reads, in one-letter code: Sec-independent protein translocase protein TatA (88 aa).

The chain crosses the membrane as a helical span at residues Met1–Gly21. Residues Asp46–Ala88 form a disordered region.

This sequence belongs to the TatA/E family. The Tat system comprises two distinct complexes: a TatABC complex, containing multiple copies of TatA, TatB and TatC subunits, and a separate TatA complex, containing only TatA subunits. Substrates initially bind to the TatABC complex, which probably triggers association of the separate TatA complex to form the active translocon.

It localises to the cell inner membrane. Functionally, part of the twin-arginine translocation (Tat) system that transports large folded proteins containing a characteristic twin-arginine motif in their signal peptide across membranes. TatA could form the protein-conducting channel of the Tat system. This is Sec-independent protein translocase protein TatA from Psychromonas ingrahamii (strain DSM 17664 / CCUG 51855 / 37).